We begin with the raw amino-acid sequence, 375 residues long: 23S rRNA (uracil(747)-C(5))-methyltransferase RlmC (375 aa).

Positions 3, 11, 14, and 87 each coordinate [4Fe-4S] cluster. Residues Q212, F241, E262, and N307 each coordinate S-adenosyl-L-methionine. C334 functions as the Nucleophile in the catalytic mechanism.

This sequence belongs to the class I-like SAM-binding methyltransferase superfamily. RNA M5U methyltransferase family. RlmC subfamily.

It carries out the reaction uridine(747) in 23S rRNA + S-adenosyl-L-methionine = 5-methyluridine(747) in 23S rRNA + S-adenosyl-L-homocysteine + H(+). Catalyzes the formation of 5-methyl-uridine at position 747 (m5U747) in 23S rRNA. The chain is 23S rRNA (uracil(747)-C(5))-methyltransferase RlmC from Escherichia coli O6:H1 (strain CFT073 / ATCC 700928 / UPEC).